A 196-amino-acid polypeptide reads, in one-letter code: Putative NADH dehydrogenase/NAD(P)H nitroreductase Smlt0482 (196 aa).

The protein belongs to the nitroreductase family. HadB/RutE subfamily. It depends on FMN as a cofactor.

The chain is Putative NADH dehydrogenase/NAD(P)H nitroreductase Smlt0482 from Stenotrophomonas maltophilia (strain K279a).